A 417-amino-acid chain; its full sequence is NADH-quinone oxidoreductase subunit D (417 aa).

This sequence belongs to the complex I 49 kDa subunit family. As to quaternary structure, NDH-1 is composed of 14 different subunits. Subunits NuoB, C, D, E, F, and G constitute the peripheral sector of the complex.

The protein resides in the cell inner membrane. The catalysed reaction is a quinone + NADH + 5 H(+)(in) = a quinol + NAD(+) + 4 H(+)(out). Its function is as follows. NDH-1 shuttles electrons from NADH, via FMN and iron-sulfur (Fe-S) centers, to quinones in the respiratory chain. The immediate electron acceptor for the enzyme in this species is believed to be ubiquinone. Couples the redox reaction to proton translocation (for every two electrons transferred, four hydrogen ions are translocated across the cytoplasmic membrane), and thus conserves the redox energy in a proton gradient. This Burkholderia orbicola (strain MC0-3) protein is NADH-quinone oxidoreductase subunit D.